We begin with the raw amino-acid sequence, 682 residues long: MELLRTITYQPAAGTKMCEQALGKACGGDSKKKRPQQPSEDGQPQAQVTPAAPHHHHHHSHSGPEISRIIVDPTTGKRYCRGKVLGKGGFAKCYEMTDLTNNKVYAAKIIPHSRVAKPHQREKIDKEIELHRLLHHKHVVQFYHYFEDKENIYILLEYCSRRSMAHILKARKVLTEPEVRYYLRQIVSGLKYLHEQEILHRDLKLGNFFINEAMELKVGDFGLAARLEPLEHRRRTICGTPNYLSPEVLNKQGHGCESDIWALGCVMYTMLLGRPPFETTNLKETYRCIREARYTMPSSLLAPAKHLIASMLSKNPEDRPSLDDIIRHDFFLQGFTPDRLSSSCCHTVPDFHLSSPAKNFFKKAAAALFGGKKDKARYNDTHNKVSKEDEDIYKLRHDLKKVSITQQPSKHRADEEPQPPPTTVARSGTSAVENKQQIGDAIRMIVRGTLGSCSSSSECLEDSTMGSVADTVARVLRGCLENMPEADCIPKEQLSTSFQWVTKWVDYSNKYGFGYQLSDHTVGVLFNNGAHMSLLPDKKTVHYYAELGQCSVFPATDAPEQFISQVTVLKYFSHYMEENLMDGGDLPSVTDIRRPRLYLLQWLKSDKALMMLFNDGTFQVNFYHDHTKIIICNQSEEYLLTYINEDRISTTFRLTTLLMSGCSLELKNRMEYALNMLLQRCN.

Residues 25-67 (ACGGDSKKKRPQQPSEDGQPQAQVTPAAPHHHHHHSHSGPEIS) form a disordered region. The segment covering 36-48 (QQPSEDGQPQAQV) has biased composition (polar residues). Positions 79-331 (YCRGKVLGKG…LDDIIRHDFF (253 aa)) constitute a Protein kinase domain. ATP is bound by residues 85-93 (LGKGGFAKC) and Lys-108. Residue Asp-202 is the Proton acceptor of the active site. Residue Thr-236 is modified to Phosphothreonine. The tract at residues 403-432 (SITQQPSKHRADEEPQPPPTTVARSGTSAV) is disordered. 2 consecutive POLO box domains span residues 500–578 (WVTK…YMEE) and 598–682 (YLLQ…QRCN).

Belongs to the protein kinase superfamily. Ser/Thr protein kinase family. CDC5/Polo subfamily. In terms of assembly, interacts with NSF; causing NSF dissociation from GRIA2. Interacts with CIB1. Post-translationally, catalytic activity is enhanced by phosphorylation of Thr-236. In terms of tissue distribution, brain, lung and heart.

The protein resides in the cytoplasm. It localises to the cytoskeleton. The protein localises to the microtubule organizing center. Its subcellular location is the centrosome. It is found in the centriole. The protein resides in the cell projection. It localises to the dendrite. The enzyme catalyses L-seryl-[protein] + ATP = O-phospho-L-seryl-[protein] + ADP + H(+). The catalysed reaction is L-threonyl-[protein] + ATP = O-phospho-L-threonyl-[protein] + ADP + H(+). Activated by phosphorylation of Thr-236. Once activated, activity is stimulated by binding target proteins. In terms of biological role, tumor suppressor serine/threonine-protein kinase involved in synaptic plasticity, centriole duplication and G1/S phase transition. Polo-like kinases act by binding and phosphorylating proteins that are already phosphorylated on a specific motif recognized by the POLO box domains. Phosphorylates CPAP, NPM1, RAPGEF2, RASGRF1, SNCA, SIPA1L1 and SYNGAP1. Plays a key role in synaptic plasticity and memory by regulating the Ras and Rap protein signaling: required for overactivity-dependent spine remodeling by phosphorylating the Ras activator RASGRF1 and the Rap inhibitor SIPA1L1 leading to their degradation by the proteasome. Conversely, phosphorylates the Rap activator RAPGEF2 and the Ras inhibitor SYNGAP1, promoting their activity. Also regulates synaptic plasticity independently of kinase activity, via its interaction with NSF that disrupts the interaction between NSF and the GRIA2 subunit of AMPARs, leading to a rapid rundown of AMPAR-mediated current that occludes long term depression. Required for procentriole formation and centriole duplication by phosphorylating CPAP and NPM1, respectively. Its induction by p53/TP53 suggests that it may participate in the mitotic checkpoint following stress. The protein is Serine/threonine-protein kinase PLK2 (Plk2) of Mus musculus (Mouse).